Reading from the N-terminus, the 351-residue chain is CCN family member 3 (351 aa).

A signal peptide spans 1 to 24; the sequence is METGGGQGLPVLLLLLLLLRPCEV. An IGFBP N-terminal domain is found at 27 to 101; the sequence is REAACPRPCG…GGGAGICMVL (75 aa). Intrachain disulfides connect C31-C57, C35-C59, C39-C60, C46-C63, C71-C85, and C77-C98. In terms of domain architecture, VWFC spans 104 to 170; that stretch reads DNCVFDGMIY…GECCEKWVCD (67 aa). The TSP type-1 domain occupies 201–246; it reads NCIEQTTEWSACSKSCGMGFSTRVTNRNQQCEMVKQTRLCMMRPCE. 5 disulfides stabilise this stretch: C258–C295, C275–C309, C286–C325, C289–C327, and C294–C331. Residues 258–332 enclose the CTCK domain; sequence CIQTKKSMKA…NTCVCHGNCP (75 aa). The N-linked (GlcNAc...) asparagine glycan is linked to N274.

This sequence belongs to the CCN family. Brain and heart, and at a lower level in muscle and intestine, in the embryo. Lung and less so in brain and spleen, in adult chicken.

It localises to the secreted. It is found in the cytoplasm. Its subcellular location is the cell junction. The protein localises to the gap junction. In terms of biological role, immediate-early protein likely to play a role in cell growth regulation. Its overexpression is associated with tumorigenesis and expression of a N-terminal-truncated version of CCN3 gene in chicken embryonic fibroblasts (CEF) is sufficient to induce the transformation of CEF in vitro. This Gallus gallus (Chicken) protein is CCN family member 3 (CCN3).